The chain runs to 84 residues: Cell division topological specificity factor (84 aa).

It belongs to the MinE family.

In terms of biological role, prevents the cell division inhibition by proteins MinC and MinD at internal division sites while permitting inhibition at polar sites. This ensures cell division at the proper site by restricting the formation of a division septum at the midpoint of the long axis of the cell. This Paraburkholderia phymatum (strain DSM 17167 / CIP 108236 / LMG 21445 / STM815) (Burkholderia phymatum) protein is Cell division topological specificity factor.